The chain runs to 528 residues: Neuronal acetylcholine receptor subunit alpha-2 (528 aa).

The N-terminal stretch at 1–23 is a signal peptide; that stretch reads MGWPCRSIIPLLVWCFVTLQAAT. Topologically, residues 24 to 239 are extracellular; it reads REQKQPHGFA…ITFYFVIRRL (216 aa). N-linked (GlcNAc...) asparagine glycans are attached at residues asparagine 54 and asparagine 104. 2 cysteine pairs are disulfide-bonded: cysteine 158–cysteine 172 and cysteine 222–cysteine 223. A run of 3 helical transmembrane segments spans residues 240 to 264, 272 to 290, and 306 to 327; these read PLFY…VFYL, ITLC…LLIT, and YLLF…VLNV. The Cytoplasmic segment spans residues 328–501; that stretch reads HHRSPSTHTM…WKYVAMVIDR (174 aa). Over residues 390–410 the composition is skewed to acidic residues; the sequence is DDKWEEEEEEEEEEEEEEEEE. The tract at residues 390–427 is disordered; sequence DDKWEEEEEEEEEEEEEEEEEKAYPSRVPSGGSQGTQC. The chain crosses the membrane as a helical span at residues 502 to 520; it reads IFLWMFIIVCLLGTVGLFL.

It belongs to the ligand-gated ion channel (TC 1.A.9) family. Acetylcholine receptor (TC 1.A.9.1) subfamily. Alpha-2/CHRNA2 sub-subfamily. In terms of assembly, neuronal AChR is composed of two different types of subunits: alpha and non-alpha (beta). CHRNA2/alpha-2 subunit can be combined to CHRNB2/beta-2 or CHRNB4/beta-4 to give rise to functional receptors. Both CHRNA2:CHRNB2 and CHRNA2:CHRNB4 nAChR complexes are heteropentamers with two subtypes: LS (low agonist sensitivity) with a (CHRNA2)3:(CHRNB2/4)2 and HS (high agonist sensitivity) with a (CHRNA2)2:(CHRNB2/4)3 stoichiometries; the subtypes differ in their subunit binding interfaces which are involved in ligand binding.

It is found in the synaptic cell membrane. The protein localises to the cell membrane. The catalysed reaction is Ca(2+)(in) = Ca(2+)(out). It catalyses the reaction K(+)(in) = K(+)(out). It carries out the reaction Na(+)(in) = Na(+)(out). Functionally, component of neuronal acetylcholine receptors (nAChRs) that function as pentameric, ligand-gated cation channels with high calcium permeability among other activities. nAChRs are excitatory neurotrasnmitter receptors formed by a collection of nAChR subunits known to mediate synaptic transmission in the nervous system and the neuromuscular junction. Each nAchR subunit confers differential attributes to channel properties, including activation, deactivation and desensitization kinetics, pH sensitivity, cation permeability, and binding to allosteric modulators. CHRNA2 forms heteropentameric neuronal acetylcholine receptors with CHRNB2 and CHRNB4 and plays a role in nicotine dependence. The protein is Neuronal acetylcholine receptor subunit alpha-2 (CHRNA2) of Gallus gallus (Chicken).